The primary structure comprises 91 residues: Small ribosomal subunit protein uS19 (91 aa).

Belongs to the universal ribosomal protein uS19 family.

Protein S19 forms a complex with S13 that binds strongly to the 16S ribosomal RNA. The protein is Small ribosomal subunit protein uS19 of Prochlorococcus marinus subsp. pastoris (strain CCMP1986 / NIES-2087 / MED4).